The following is a 734-amino-acid chain: Photosystem I P700 chlorophyll a apoprotein A2 (734 aa).

The next 8 membrane-spanning stretches (helical) occupy residues 46 to 69 (IFAS…FHVA), 135 to 158 (LYTG…LHLQ), 175 to 199 (LNHH…HVAI), 273 to 291 (IAHH…GHMY), 330 to 353 (IHFQ…QHMY), 369 to 395 (AALY…IFFI), 417 to 439 (AIIS…LYVH), and 517 to 535 (FLVH…LILV). Residues Cys559 and Cys568 each contribute to the [4Fe-4S] cluster site. 2 helical membrane-spanning segments follow: residues 575–596 (AFYL…YWHW) and 643–665 (LSVW…MFLI). Chlorophyll a contacts are provided by His654, Met662, and Tyr670. Residue Trp671 participates in phylloquinone binding. The helical transmembrane segment at 707–727 (LVGLAHFSVGYIFTYAAFLIA) threads the bilayer.

Belongs to the PsaA/PsaB family. The PsaA/B heterodimer binds the P700 chlorophyll special pair and subsequent electron acceptors. PSI consists of a core antenna complex that captures photons, and an electron transfer chain that converts photonic excitation into a charge separation. The eukaryotic PSI reaction center is composed of at least 11 subunits. Requires P700 is a chlorophyll a/chlorophyll a' dimer, A0 is one or more chlorophyll a, A1 is one or both phylloquinones and FX is a shared 4Fe-4S iron-sulfur center. as cofactor.

The protein localises to the plastid. It localises to the chloroplast thylakoid membrane. The enzyme catalyses reduced [plastocyanin] + hnu + oxidized [2Fe-2S]-[ferredoxin] = oxidized [plastocyanin] + reduced [2Fe-2S]-[ferredoxin]. Functionally, psaA and PsaB bind P700, the primary electron donor of photosystem I (PSI), as well as the electron acceptors A0, A1 and FX. PSI is a plastocyanin-ferredoxin oxidoreductase, converting photonic excitation into a charge separation, which transfers an electron from the donor P700 chlorophyll pair to the spectroscopically characterized acceptors A0, A1, FX, FA and FB in turn. Oxidized P700 is reduced on the lumenal side of the thylakoid membrane by plastocyanin. The polypeptide is Photosystem I P700 chlorophyll a apoprotein A2 (Vitis vinifera (Grape)).